We begin with the raw amino-acid sequence, 489 residues long: GTPase Der (489 aa).

2 EngA-type G domains span residues 30–199 (PVVS…KDKP) and 227–403 (FRLA…SRSH). Residues 36-43 (GRQNVGKS), 85-89 (DTPGL), 151-154 (NKAD), 233-240 (GKPNSGKS), 280-284 (DTAGI), and 345-348 (NKWD) contribute to the GTP site. Residues 404 to 488 (RKVSTSELNK…PIRLEFRSDR (85 aa)) form the KH-like domain.

This sequence belongs to the TRAFAC class TrmE-Era-EngA-EngB-Septin-like GTPase superfamily. EngA (Der) GTPase family. Associates with the 50S ribosomal subunit.

In terms of biological role, GTPase that plays an essential role in the late steps of ribosome biogenesis. The polypeptide is GTPase Der (Leptospira interrogans serogroup Icterohaemorrhagiae serovar Lai (strain 56601)).